The chain runs to 490 residues: Nicotinate phosphoribosyltransferase (490 aa).

Histidine 206 is modified (phosphohistidine).

It belongs to the NAPRTase family. Transiently phosphorylated on a His residue during the reaction cycle. Phosphorylation strongly increases the affinity for substrates and increases the rate of nicotinate D-ribonucleotide production. Dephosphorylation regenerates the low-affinity form of the enzyme, leading to product release.

The enzyme catalyses nicotinate + 5-phospho-alpha-D-ribose 1-diphosphate + ATP + H2O = nicotinate beta-D-ribonucleotide + ADP + phosphate + diphosphate. It participates in cofactor biosynthesis; NAD(+) biosynthesis; nicotinate D-ribonucleotide from nicotinate: step 1/1. In terms of biological role, catalyzes the synthesis of beta-nicotinate D-ribonucleotide from nicotinate and 5-phospho-D-ribose 1-phosphate at the expense of ATP. The chain is Nicotinate phosphoribosyltransferase (pncB) from Bacillus subtilis (strain 168).